Reading from the N-terminus, the 428-residue chain is Glutamyl-tRNA reductase (428 aa).

Residues threonine 49 to arginine 52, serine 109, glutamate 114 to glutamine 116, and glutamine 120 contribute to the substrate site. Cysteine 50 functions as the Nucleophile in the catalytic mechanism. Glycine 189–serine 194 contacts NADP(+).

This sequence belongs to the glutamyl-tRNA reductase family. As to quaternary structure, homodimer.

It catalyses the reaction (S)-4-amino-5-oxopentanoate + tRNA(Glu) + NADP(+) = L-glutamyl-tRNA(Glu) + NADPH + H(+). Its pathway is porphyrin-containing compound metabolism; protoporphyrin-IX biosynthesis; 5-aminolevulinate from L-glutamyl-tRNA(Glu): step 1/2. It participates in porphyrin-containing compound metabolism; chlorophyll biosynthesis. In terms of biological role, catalyzes the NADPH-dependent reduction of glutamyl-tRNA(Glu) to glutamate 1-semialdehyde (GSA). The protein is Glutamyl-tRNA reductase of Trichormus variabilis (strain ATCC 29413 / PCC 7937) (Anabaena variabilis).